The primary structure comprises 283 residues: tRNA-cytidine(32) 2-sulfurtransferase (283 aa).

The PP-loop motif signature appears at 49-54; sequence SGGKDS. Residues Cys124, Cys127, and Cys215 each contribute to the [4Fe-4S] cluster site.

Belongs to the TtcA family. Homodimer. The cofactor is Mg(2+). [4Fe-4S] cluster is required as a cofactor.

It localises to the cytoplasm. The catalysed reaction is cytidine(32) in tRNA + S-sulfanyl-L-cysteinyl-[cysteine desulfurase] + AH2 + ATP = 2-thiocytidine(32) in tRNA + L-cysteinyl-[cysteine desulfurase] + A + AMP + diphosphate + H(+). The protein operates within tRNA modification. Functionally, catalyzes the ATP-dependent 2-thiolation of cytidine in position 32 of tRNA, to form 2-thiocytidine (s(2)C32). The sulfur atoms are provided by the cysteine/cysteine desulfurase (IscS) system. The chain is tRNA-cytidine(32) 2-sulfurtransferase from Acaryochloris marina (strain MBIC 11017).